We begin with the raw amino-acid sequence, 1031 residues long: Caprin-2 (1031 aa).

Disordered regions lie at residues 1–27 (MKSAKSQVNQDQQGENQRALSPLQSTL), 364–458 (LQEE…SWEN), 500–520 (PKDVPKPLPQPIDSSSALPKD), 605–658 (DQAS…SSEA), and 830–876 (RSGT…SMTP). Composition is skewed to polar residues over residues 425 to 439 (VSVQSEQSGSRSWTT) and 446 to 458 (ASVQPGTPVSWEN). Low complexity predominate over residues 608 to 646 (SSGSETEFTTSETPEMVVSPCKPKPASALASPNPPLSKS). Positions 830-853 (RSGTSSGLQANSRAGWSDSSQVSS) are enriched in polar residues. 2 positions are modified to phosphoserine: Ser852 and Ser853. Positions 897 to 1031 (PQQMRVAFSA…TFSGYLLYQD (135 aa)) constitute a C1q domain. Ca(2+) contacts are provided by Asp982 and Glu988.

Belongs to the caprin family. Homotrimer; via C1q domain. Found in a complex with LRP6, CCNY and CDK14 during G2/M stage; CAPRIN2 functions as a scaffold for the complex by binding to CCNY via its N terminus and to CDK14 via its C terminus. Interacts with LRP5. Interacts with LRP6. As to expression, specifically expressed in brain (at protein level).

It is found in the cytoplasm. The protein resides in the cell membrane. Functionally, promotes phosphorylation of the Wnt coreceptor LRP6, leading to increased activity of the canonical Wnt signaling pathway. Facilitates constitutive LRP6 phosphorylation by CDK14/CCNY during G2/M stage of the cell cycle, which may potentiate cells for Wnt signaling. May regulate the transport and translation of mRNAs, modulating for instance the expression of proteins involved in synaptic plasticity in neurons. Involved in regulation of growth as erythroblasts shift from a highly proliferative state towards their terminal phase of differentiation. May be involved in apoptosis. The chain is Caprin-2 from Mus musculus (Mouse).